The following is a 274-amino-acid chain: Penicillin-insensitive murein endopeptidase (274 aa).

Residues 1–19 (MKKTAIALLAWFVSSASLA) form the signal peptide. Intrachain disulfides connect cysteine 44–cysteine 265, cysteine 187–cysteine 235, and cysteine 216–cysteine 223. 6 residues coordinate Zn(2+): histidine 110, histidine 113, aspartate 120, aspartate 147, histidine 150, and histidine 211. Residues 225–274 (DQPLPPPGDGCGAELQSWFEPPKPGTTKPEKKTPPPLPPSCQALLDEHVL) are disordered.

The protein belongs to the peptidase M74 family. In terms of assembly, dimer. Zn(2+) serves as cofactor.

It is found in the periplasm. In terms of biological role, murein endopeptidase that cleaves the D-alanyl-meso-2,6-diamino-pimelyl amide bond that connects peptidoglycan strands. Likely plays a role in the removal of murein from the sacculus. This chain is Penicillin-insensitive murein endopeptidase, found in Salmonella heidelberg (strain SL476).